The primary structure comprises 891 residues: Valine--tRNA ligase (891 aa).

A 'HIGH' region motif is present at residues 43-53 (PFTSGTLHLGH). The 'KMSKS' region signature appears at 536–540 (KMSKS). Residue Lys-539 coordinates ATP.

This sequence belongs to the class-I aminoacyl-tRNA synthetase family. ValS type 2 subfamily.

The protein resides in the cytoplasm. It carries out the reaction tRNA(Val) + L-valine + ATP = L-valyl-tRNA(Val) + AMP + diphosphate. Its function is as follows. Catalyzes the attachment of valine to tRNA(Val). As ValRS can inadvertently accommodate and process structurally similar amino acids such as threonine, to avoid such errors, it has a 'posttransfer' editing activity that hydrolyzes mischarged Thr-tRNA(Val) in a tRNA-dependent manner. The polypeptide is Valine--tRNA ligase (Pyrococcus abyssi (strain GE5 / Orsay)).